We begin with the raw amino-acid sequence, 180 residues long: uncharacterized protein (180 aa).

This is an uncharacterized protein from Rickettsia prowazekii (strain Madrid E).